The chain runs to 280 residues: Energy-coupling factor transporter ATP-binding protein EcfA (280 aa).

The ABC transporter domain maps to 5–240 (IDVKNLTYKY…DEMLKLTGLE (236 aa)). 40 to 47 (GHNGSGKS) serves as a coordination point for ATP.

The protein belongs to the ABC transporter superfamily. Energy-coupling factor EcfA family. As to quaternary structure, forms a stable energy-coupling factor (ECF) transporter complex composed of 2 membrane-embedded substrate-binding proteins (S component), 2 ATP-binding proteins (A component) and 2 transmembrane proteins (T component).

Its subcellular location is the cell membrane. Its function is as follows. ATP-binding (A) component of a common energy-coupling factor (ECF) ABC-transporter complex. Unlike classic ABC transporters this ECF transporter provides the energy necessary to transport a number of different substrates. This is Energy-coupling factor transporter ATP-binding protein EcfA from Pediococcus pentosaceus (strain ATCC 25745 / CCUG 21536 / LMG 10740 / 183-1w).